A 520-amino-acid polypeptide reads, in one-letter code: Cobyric acid synthase (520 aa).

Residues Glu-254–Leu-465 enclose the GATase cobBQ-type domain. Cys-335 acts as the Nucleophile in catalysis. His-457 is a catalytic residue.

This sequence belongs to the CobB/CobQ family. CobQ subfamily.

Its pathway is cofactor biosynthesis; adenosylcobalamin biosynthesis. In terms of biological role, catalyzes amidations at positions B, D, E, and G on adenosylcobyrinic A,C-diamide. NH(2) groups are provided by glutamine, and one molecule of ATP is hydrogenolyzed for each amidation. In Sorangium cellulosum (strain So ce56) (Polyangium cellulosum (strain So ce56)), this protein is Cobyric acid synthase.